A 290-amino-acid chain; its full sequence is Protease HtpX homolog (290 aa).

Transmembrane regions (helical) follow at residues 5 to 27 (MWLR…GYLF) and 32 to 51 (VAFI…YWYS). Zn(2+) is bound at residue histidine 133. The active site involves glutamate 134. Zn(2+) is bound at residue histidine 137. A run of 2 helical transmembrane segments spans residues 143 to 163 (ILIG…AYWA) and 182 to 202 (IIGA…IQAA). Position 208 (glutamate 208) interacts with Zn(2+).

This sequence belongs to the peptidase M48B family. The cofactor is Zn(2+).

Its subcellular location is the cell membrane. The protein is Protease HtpX homolog of Thermococcus kodakarensis (strain ATCC BAA-918 / JCM 12380 / KOD1) (Pyrococcus kodakaraensis (strain KOD1)).